The following is a 252-amino-acid chain: CLAVATA3/ESR (CLE)-related protein 4A-1 (252 aa).

Positions methionine 1 to alanine 21 are cleaved as a signal peptide. The tract at residues alanine 21–methionine 83 is required for secretion from the host cytoplasm to the host apoplasm. Asparagine 32 carries an N-linked (GlcNAc...) asparagine glycan. The tract at residues arginine 116–histidine 252 is disordered. 2 stretches are compositionally biased toward basic and acidic residues: residues histidine 125–valine 137 and proline 144–glycine 242. An A-1 repeat occupies glutamate 127–lysine 135. Residues glutamate 127 to lysine 219 form a 6 X approximate repeat A region. A CLE-1 repeat occupies arginine 136–histidine 147. The segment at arginine 136–histidine 252 is 6 X approximate repeat CLE. An A-2 repeat occupies glutamine 148–lysine 156. One copy of the CLE-2 repeat lies at arginine 157–histidine 168. Residues glutamate 169 to lysine 177 form an A-3 repeat. A CLE-3 repeat occupies arginine 178–histidine 189. One copy of the A-4 repeat lies at glutamate 190 to lysine 198. The stretch at arginine 199–histidine 210 is one CLE-4 repeat. The stretch at glutamate 211–lysine 219 is one A-5 repeat. A CLE-5 repeat occupies arginine 220–histidine 231. The stretch at glutamate 232–lysine 240 is one A-6 repeat. The CLE-6 repeat unit spans residues arginine 241–histidine 252.

The protein belongs to the CLV3/ESR signal peptide family. As to expression, highly expressed exclusively within the dorsal esophageal gland cell during syncytium formation in host plants.

The protein localises to the secreted. It is found in the host cytoplasm. The protein resides in the host extracellular space. Its subcellular location is the extracellular space. It localises to the apoplast. Mimics host plant CLE extracellular signal peptides that regulate cell fate. May play a role in the differentiation or division of feeding cells (syncytia) induced in plant roots during infection. This is CLAVATA3/ESR (CLE)-related protein 4A-1 (CLE-4A-1) from Globodera rostochiensis (Golden nematode worm).